Consider the following 363-residue polypeptide: 3-dehydroquinate synthase (363 aa).

NAD(+) contacts are provided by residues 107–111 (GVIGD), 131–132 (TT), Lys-144, and Lys-153. Positions 186, 251, and 268 each coordinate Zn(2+).

It belongs to the sugar phosphate cyclases superfamily. Dehydroquinate synthase family. The cofactor is Co(2+). Requires Zn(2+) as cofactor. It depends on NAD(+) as a cofactor.

It is found in the cytoplasm. It catalyses the reaction 7-phospho-2-dehydro-3-deoxy-D-arabino-heptonate = 3-dehydroquinate + phosphate. It participates in metabolic intermediate biosynthesis; chorismate biosynthesis; chorismate from D-erythrose 4-phosphate and phosphoenolpyruvate: step 2/7. Its function is as follows. Catalyzes the conversion of 3-deoxy-D-arabino-heptulosonate 7-phosphate (DAHP) to dehydroquinate (DHQ). The polypeptide is 3-dehydroquinate synthase (Nostoc punctiforme (strain ATCC 29133 / PCC 73102)).